Consider the following 637-residue polypeptide: Threonine--tRNA ligase (637 aa).

Positions 1–61 (MIKISLKNGK…NKDCKVEILT (61 aa)) constitute a TGS domain. The interval 242–532 (DHRKLGKELD…LIEHYAGAFP (291 aa)) is catalytic. 3 residues coordinate Zn(2+): Cys-333, His-384, and His-509.

The protein belongs to the class-II aminoacyl-tRNA synthetase family. As to quaternary structure, homodimer. Zn(2+) serves as cofactor.

It is found in the cytoplasm. The catalysed reaction is tRNA(Thr) + L-threonine + ATP = L-threonyl-tRNA(Thr) + AMP + diphosphate + H(+). Functionally, catalyzes the attachment of threonine to tRNA(Thr) in a two-step reaction: L-threonine is first activated by ATP to form Thr-AMP and then transferred to the acceptor end of tRNA(Thr). Also edits incorrectly charged L-seryl-tRNA(Thr). This Clostridium kluyveri (strain NBRC 12016) protein is Threonine--tRNA ligase.